The chain runs to 1257 residues: Phosphatidylinositol 3,4,5-trisphosphate 5-phosphatase 2 (1257 aa).

The SH2 domain maps to 21–117 (WYHRDLSRAA…GLVCALLLPV (97 aa)). Basic and acidic residues predominate over residues 119-132 (GEREPDPPDDRDAS). The disordered stretch occupies residues 119-181 (GEREPDPPDD…ESTPNGLSTV (63 aa)). Phosphoserine is present on S132. Residues 156-166 (PSSPLPAPETP) show a composition bias toward pro residues. Position 165 is a phosphothreonine (T165). Residues S241 and S353 each carry the phosphoserine modification. Position 887 is a phosphotyrosine (Y887). S891 carries the post-translational modification Phosphoserine. A disordered region spans residues 897–986 (TGAKSKAPSV…PPKNSFNNPA (90 aa)). Pro residues predominate over residues 939–951 (PPPTGRPPAPPRA). The short motif at 945–950 (PPAPPR) is the SH3-binding element. The span at 952–966 (VPREESLNPRLKSEG) shows a compositional bias: basic and acidic residues. The NPXY motif signature appears at 984-987 (NPAY). Phosphotyrosine is present on Y987. A disordered region spans residues 1004–1115 (SFARAPIPPT…PASTFLEEVA (112 aa)). Composition is skewed to pro residues over residues 1049–1060 (LPPPDFPPPPLP) and 1088–1104 (GPPPPKAHPRPPLPPGT). A Phosphoserine modification is found at S1132. 2 positions are modified to phosphotyrosine: Y1136 and Y1161. One can recognise an SAM domain in the interval 1195 to 1257 (LGEAGMGAWL…LLLDTLQLSK (63 aa)). Residue S1256 is modified to Phosphoserine.

Belongs to the inositol 1,4,5-trisphosphate 5-phosphatase family. In terms of assembly, interacts with tyrosine phosphorylated form of SHC1. Interacts with EGFR. Upon stimulation by the EGF signaling pathway, it forms a complex with SHC1 and EGFR. Interacts with cytoskeletal protein SORBS3/vinexin, promoting its localization to the periphery of cells. Forms a complex with filamin (FLNA or FLNB), actin, GPIb (GP1BA or GP1BB) that regulates cortical and submembraneous actin. Interacts with c-Met/MET, when c-Met/MET is phosphorylated on 'Tyr-1356'. Interacts with p130Cas/BCAR1. Interacts with CENTD3/ARAP3 via its SAM domain. Interacts with c-Cbl/CBL and CAP/SORBS1. Interacts with activated EPHA2 receptor. Interacts with receptors FCGR2A. Interacts with FCGR2B. Interacts with tyrosine kinase ABL1. Interacts with tyrosine kinase TEC. Interacts with CSF1R. Interacts (via N-terminus) with SH3YL1 (via SH3 domain). Interacts (via SH2 domain) with tyrosine phosphorylated KLRC1 (via ITIM). Interacts with NEDD9/HEF1. In terms of processing, tyrosine phosphorylated by the members of the SRC family after exposure to a diverse array of extracellular stimuli such as insulin, growth factors such as EGF or PDGF, chemokines, integrin ligands and hypertonic and oxidative stress. May be phosphorylated upon IgG receptor FCGR2B-binding. Phosphorylated at Tyr-987 following cell attachment and spreading. Phosphorylated at Tyr-1161 following EGF signaling pathway stimulation.

It localises to the cytoplasm. The protein resides in the cytosol. Its subcellular location is the cytoskeleton. It is found in the membrane. The protein localises to the cell projection. It localises to the filopodium. The protein resides in the lamellipodium. Its subcellular location is the basal cell membrane. It is found in the nucleus. The protein localises to the nucleus speckle. It localises to the spindle pole. It catalyses the reaction a 1,2-diacyl-sn-glycero-3-phospho-(1D-myo-inositol-3,4,5-trisphosphate) + H2O = a 1,2-diacyl-sn-glycero-3-phospho-(1D-myo-inositol-3,4-bisphosphate) + phosphate. The catalysed reaction is 1,2-dioctanoyl-sn-glycero-3-phospho-(1D-myo-inositol-3,4,5-trisphosphate) + H2O = 1,2-dioctanoyl-sn-glycero-3-phospho-(1D-myo-inositol-3,4-bisphosphate) + phosphate. The enzyme catalyses 1,2-dihexadecanoyl-sn-glycero-3-phospho-(1D-myo-inositol-3,4,5-trisphosphate) + H2O = 1,2-dihexadecanoyl-sn-glycero-3-phospho-(1D-myo-inositol-3,4-bisphosphate) + phosphate. With respect to regulation, activated upon translocation to the sites of synthesis of PtdIns(3,4,5)P3 in the membrane. Enzymatic activity is enhanced in the presence of phosphatidylserine. Phosphatidylinositol (PtdIns) phosphatase that specifically hydrolyzes the 5-phosphate of phosphatidylinositol-3,4,5-trisphosphate (PtdIns(3,4,5)P3) to produce PtdIns(3,4)P2, thereby negatively regulating the PI3K (phosphoinositide 3-kinase) pathways. Required for correct mitotic spindle orientation and therefore progression of mitosis. Plays a central role in regulation of PI3K-dependent insulin signaling, although the precise molecular mechanisms and signaling pathways remain unclear. While overexpression reduces both insulin-stimulated MAP kinase and Akt activation, its absence does not affect insulin signaling or GLUT4 trafficking. Confers resistance to dietary obesity. May act by regulating AKT2, but not AKT1, phosphorylation at the plasma membrane. Part of a signaling pathway that regulates actin cytoskeleton remodeling. Required for the maintenance and dynamic remodeling of actin structures as well as in endocytosis, having a major impact on ligand-induced EGFR internalization and degradation. Participates in regulation of cortical and submembraneous actin by hydrolyzing PtdIns(3,4,5)P3 thereby regulating membrane ruffling. Regulates cell adhesion and cell spreading. Required for HGF-mediated lamellipodium formation, cell scattering and spreading. Acts as a negative regulator of EPHA2 receptor endocytosis by inhibiting via PI3K-dependent Rac1 activation. Acts as a regulator of neuritogenesis by regulating PtdIns(3,4,5)P3 level and is required to form an initial protrusive pattern, and later, maintain proper neurite outgrowth. Acts as a negative regulator of the FC-gamma-RIIA receptor (FCGR2A). Mediates signaling from the FC-gamma-RIIB receptor (FCGR2B), playing a central role in terminating signal transduction from activating immune/hematopoietic cell receptor systems. Involved in EGF signaling pathway. Upon stimulation by EGF, it is recruited by EGFR and dephosphorylates PtdIns(3,4,5)P3. Plays a negative role in regulating the PI3K-PKB pathway, possibly by inhibiting PKB activity. Down-regulates Fc-gamma-R-mediated phagocytosis in macrophages independently of INPP5D/SHIP1. In macrophages, down-regulates NF-kappa-B-dependent gene transcription by regulating macrophage colony-stimulating factor (M-CSF)-induced signaling. Plays a role in the localization of AURKA and NEDD9/HEF1 to the basolateral membrane at interphase in polarized cysts, thereby mediates cell cycle homeostasis, cell polarization and cilia assembly. Additionally promotion of cilia growth is also facilitated by hydrolysis of (PtdIns(3,4,5)P3) to PtdIns(3,4)P2. Promotes formation of apical membrane-initiation sites during the initial stages of lumen formation via Rho family-induced actin filament organization and CTNNB1 localization to cell-cell contacts. May also hydrolyze PtdIns(1,3,4,5)P4, and could thus affect the levels of the higher inositol polyphosphates like InsP6. Involved in endochondral ossification. The protein is Phosphatidylinositol 3,4,5-trisphosphate 5-phosphatase 2 of Rattus norvegicus (Rat).